The following is a 536-amino-acid chain: Putative lipase ATG15 (536 aa).

Residues 1–8 (MGNPTLMR) lie on the Cytoplasmic side of the membrane. A helical; Signal-anchor for type II membrane protein membrane pass occupies residues 9 to 31 (WPVTRILVLGLVVTVLYKAMAIY). Residues 32–536 (SSRRAPVQVC…YCLEYGPELR (505 aa)) lie on the Lumenal side of the membrane. N-linked (GlcNAc...) asparagine glycosylation is found at Asn-152, Asn-187, and Asn-293. The active-site Charge relay system is Ser-309. Asn-426 and Asn-516 each carry an N-linked (GlcNAc...) asparagine glycan.

This sequence belongs to the AB hydrolase superfamily. Lipase family. Binds to both phosphatidylinositol (PI) and phosphatidylinositol 3,5-bisphosphate (PIP2).

It is found in the endosome. Its subcellular location is the multivesicular body membrane. It localises to the prevacuolar compartment membrane. It carries out the reaction a triacylglycerol + H2O = a diacylglycerol + a fatty acid + H(+). Functionally, lipase which is essential for lysis of subvacuolar cytoplasm to vacuole targeted bodies and intravacuolar autophagic bodies. Involved in the lysis of intravacuolar multivesicular body (MVB) vesicles. The intravacuolar membrane disintegration by ATG15 is critical to life span extension. The sequence is that of Putative lipase ATG15 (ATG15) from Pichia angusta (Yeast).